The chain runs to 197 residues: NADH-quinone oxidoreductase subunit B (197 aa).

Residues cysteine 63, cysteine 64, cysteine 129, and cysteine 159 each contribute to the [4Fe-4S] cluster site.

It belongs to the complex I 20 kDa subunit family. As to quaternary structure, NDH-1 is composed of 14 different subunits. Subunits NuoB, C, D, E, F, and G constitute the peripheral sector of the complex. [4Fe-4S] cluster serves as cofactor.

It is found in the cell inner membrane. It catalyses the reaction a quinone + NADH + 5 H(+)(in) = a quinol + NAD(+) + 4 H(+)(out). NDH-1 shuttles electrons from NADH, via FMN and iron-sulfur (Fe-S) centers, to quinones in the respiratory chain. The immediate electron acceptor for the enzyme in this species is believed to be a menaquinone. Couples the redox reaction to proton translocation (for every two electrons transferred, four hydrogen ions are translocated across the cytoplasmic membrane), and thus conserves the redox energy in a proton gradient. In Bacteroides thetaiotaomicron (strain ATCC 29148 / DSM 2079 / JCM 5827 / CCUG 10774 / NCTC 10582 / VPI-5482 / E50), this protein is NADH-quinone oxidoreductase subunit B.